Here is a 301-residue protein sequence, read N- to C-terminus: Transcriptional activator protein NhaR (301 aa).

The HTH lysR-type domain maps to 6-63 (INYNHLYYFWHVYKEGSVVGAAEALYLTPQTITGQIRALEERLQGKLFKRKGRGLEPS). Positions 23–42 (VVGAAEALYLTPQTITGQIR) form a DNA-binding region, H-T-H motif.

The protein belongs to the LysR transcriptional regulatory family.

The protein resides in the cytoplasm. Functionally, plays a role in the positive regulation of NhaA. The protein is Transcriptional activator protein NhaR (nhaR) of Escherichia coli (strain K12).